Reading from the N-terminus, the 241-residue chain is Small ribosomal subunit protein uS2 (241 aa).

Belongs to the universal ribosomal protein uS2 family.

The chain is Small ribosomal subunit protein uS2 from Salmonella choleraesuis (strain SC-B67).